We begin with the raw amino-acid sequence, 239 residues long: 1-(5-phosphoribosyl)-5-[(5-phosphoribosylamino)methylideneamino] imidazole-4-carboxamide isomerase (239 aa).

Asp8 functions as the Proton acceptor in the catalytic mechanism. Residue Asp129 is the Proton donor of the active site.

The protein belongs to the HisA/HisF family.

It localises to the cytoplasm. It catalyses the reaction 1-(5-phospho-beta-D-ribosyl)-5-[(5-phospho-beta-D-ribosylamino)methylideneamino]imidazole-4-carboxamide = 5-[(5-phospho-1-deoxy-D-ribulos-1-ylimino)methylamino]-1-(5-phospho-beta-D-ribosyl)imidazole-4-carboxamide. It participates in amino-acid biosynthesis; L-histidine biosynthesis; L-histidine from 5-phospho-alpha-D-ribose 1-diphosphate: step 4/9. In Pelagibacter ubique (strain HTCC1062), this protein is 1-(5-phosphoribosyl)-5-[(5-phosphoribosylamino)methylideneamino] imidazole-4-carboxamide isomerase.